We begin with the raw amino-acid sequence, 101 residues long: NADH-quinone oxidoreductase subunit K (101 aa).

3 helical membrane passes run 4–24, 30–50, and 61–81; these read LAHF…GIFL, IVLL…FVAF, and VFVF…LAIL.

The protein belongs to the complex I subunit 4L family. As to quaternary structure, NDH-1 is composed of 14 different subunits. Subunits NuoA, H, J, K, L, M, N constitute the membrane sector of the complex.

Its subcellular location is the cell inner membrane. The enzyme catalyses a quinone + NADH + 5 H(+)(in) = a quinol + NAD(+) + 4 H(+)(out). Its function is as follows. NDH-1 shuttles electrons from NADH, via FMN and iron-sulfur (Fe-S) centers, to quinones in the respiratory chain. The immediate electron acceptor for the enzyme in this species is believed to be ubiquinone. Couples the redox reaction to proton translocation (for every two electrons transferred, four hydrogen ions are translocated across the cytoplasmic membrane), and thus conserves the redox energy in a proton gradient. The protein is NADH-quinone oxidoreductase subunit K of Cupriavidus taiwanensis (strain DSM 17343 / BCRC 17206 / CCUG 44338 / CIP 107171 / LMG 19424 / R1) (Ralstonia taiwanensis (strain LMG 19424)).